The sequence spans 501 residues: G protein-activated inward rectifier potassium channel 1 (501 aa).

A disordered region spans residues 1–40; it reads MSALRRKFGDDYQVVTTSSSGSGLQPQGPGQGPQQQLVPK. Residues 1 to 80 lie on the Cytoplasmic side of the membrane; the sequence is MSALRRKFGD…LFTTLVDLKW (80 aa). Positions 18-37 are enriched in low complexity; that stretch reads SSSGSGLQPQGPGQGPQQQL. Residues 81-105 form a helical membrane-spanning segment; that stretch reads RWNLFIFILTYTVAWLFMASMWWVI. The Extracellular portion of the chain corresponds to 106 to 129; sequence AYTRGDLNKAHVGNYTPCVANVYN. Asn-119 is a glycosylation site (N-linked (GlcNAc...) asparagine). Positions 130–141 form an intramembrane region, helical; Pore-forming; that stretch reads FPSAFLFFIETE. The segment at residues 142–148 is an intramembrane region (pore-forming); sequence ATIGYGY. The Selectivity filter motif lies at 143 to 148; it reads TIGYGY. Over 149–157 the chain is Extracellular; it reads RYITDKCPE. A helical membrane pass occupies residues 158–179; that stretch reads GIILFLFQSILGSIVDAFLIGC. Over 180 to 501 the chain is Cytoplasmic; sequence MFIKMSQPKK…LRKMNSDRFT (322 aa). The tract at residues 182–209 is polyphosphoinositide (PIP2)-binding; that stretch reads IKMSQPKKRAETLMFSEHAVISMRDGKL. Ser-385 and Ser-424 each carry phosphoserine.

Belongs to the inward rectifier-type potassium channel (TC 1.A.2.1) family. KCNJ3 subfamily. As to quaternary structure, associates with KCNJ5/GIRK4 or KCNJ6/GIRK2 or KCNJ9/GIRK3 to form a G-protein activated heteromultimer pore-forming unit. The resulting inward current is much larger.

Its subcellular location is the membrane. It carries out the reaction K(+)(in) = K(+)(out). Its activity is regulated as follows. Heteromultimer composed of KCNJ3/GIRK1 and KCNJ5/GIRK4 is activated by phosphatidylinositol 4,5 biphosphate (PtdIns(4,5)P2). Inward rectifier potassium channels are characterized by a greater tendency to allow potassium to flow into the cell rather than out of it. Their voltage dependence is regulated by the concentration of extracellular potassium; as external potassium is raised, the voltage range of the channel opening shifts to more positive voltages. The inward rectification is mainly due to the blockage of outward current by internal magnesium. This potassium channel is controlled by G proteins. This receptor plays a crucial role in regulating the heartbeat. The polypeptide is G protein-activated inward rectifier potassium channel 1 (KCNJ3) (Bos taurus (Bovine)).